Here is a 473-residue protein sequence, read N- to C-terminus: Aspartyl/glutamyl-tRNA(Asn/Gln) amidotransferase subunit B (473 aa).

The protein belongs to the GatB/GatE family. GatB subfamily. In terms of assembly, heterotrimer of A, B and C subunits.

It carries out the reaction L-glutamyl-tRNA(Gln) + L-glutamine + ATP + H2O = L-glutaminyl-tRNA(Gln) + L-glutamate + ADP + phosphate + H(+). The enzyme catalyses L-aspartyl-tRNA(Asn) + L-glutamine + ATP + H2O = L-asparaginyl-tRNA(Asn) + L-glutamate + ADP + phosphate + 2 H(+). Allows the formation of correctly charged Asn-tRNA(Asn) or Gln-tRNA(Gln) through the transamidation of misacylated Asp-tRNA(Asn) or Glu-tRNA(Gln) in organisms which lack either or both of asparaginyl-tRNA or glutaminyl-tRNA synthetases. The reaction takes place in the presence of glutamine and ATP through an activated phospho-Asp-tRNA(Asn) or phospho-Glu-tRNA(Gln). The protein is Aspartyl/glutamyl-tRNA(Asn/Gln) amidotransferase subunit B of Wolbachia sp. subsp. Drosophila simulans (strain wRi).